Reading from the N-terminus, the 454-residue chain is GA-binding protein alpha chain (454 aa).

Residues alanine 168 to valine 251 form the PNT domain. Residues glutamine 297–asparagine 316 are disordered. Serine 303 carries the phosphoserine modification. Positions isoleucine 320–valine 400 form a DNA-binding region, ETS.

The protein belongs to the ETS family. As to quaternary structure, heterotetramer of two alpha and two beta subunits.

It is found in the nucleus. Transcription factor capable of interacting with purine rich repeats (GA repeats). Positively regulates transcription of transcriptional repressor RHIT/ZNF205. In terms of biological role, (Microbial infection) Necessary for the expression of the Adenovirus E4 gene. The protein is GA-binding protein alpha chain (GABPA) of Homo sapiens (Human).